The sequence spans 118 residues: uncharacterized protein (118 aa).

Positions 1–22 (MKMSYLRSGIVGFLAGASLSYA) are cleaved as a signal peptide. Residues 41-71 (TATEALETDKQLYKKIEKKIEELESSCVKKS) are a coiled coil.

This is an uncharacterized protein from Schizosaccharomyces pombe (strain 972 / ATCC 24843) (Fission yeast).